A 486-amino-acid polypeptide reads, in one-letter code: Protein DETOXIFICATION 16 (486 aa).

12 helical membrane passes run 35–55 (GPLI…VMFV), 68–88 (IATS…ASAL), 117–137 (LASI…VFFG), 142–162 (IATL…AYGL), 179–199 (VVFC…VLVF), 207–227 (GAAL…FCYV), 259–279 (ALMV…SGLL), 288–308 (VLSI…GLSG), 331–351 (RVVI…LILI), 365–385 (VVSY…LDSL), 401–421 (IGAI…GLLL), and 433–453 (WLGI…VTIF).

It belongs to the multi antimicrobial extrusion (MATE) (TC 2.A.66.1) family.

The protein localises to the membrane. The polypeptide is Protein DETOXIFICATION 16 (Arabidopsis thaliana (Mouse-ear cress)).